A 91-amino-acid polypeptide reads, in one-letter code: N(2)-fixation sustaining protein CowN (91 aa).

This sequence belongs to the CowN family.

In terms of biological role, is required to sustain N(2)-dependent growth in the presence of low levels of carbon monoxide (CO). Probably acts by protecting the N(2) fixation ability of the nitrogenase complex, which is inactivated in the presence of CO. This chain is N(2)-fixation sustaining protein CowN, found in Beijerinckia indica subsp. indica (strain ATCC 9039 / DSM 1715 / NCIMB 8712).